Reading from the N-terminus, the 114-residue chain is uncharacterized protein (114 aa).

This is an uncharacterized protein from Sputnik virophage.